We begin with the raw amino-acid sequence, 440 residues long: Serine hydroxymethyltransferase (440 aa).

(6S)-5,6,7,8-tetrahydrofolate is bound by residues Leu-119 and 123 to 125 (GHL). Lys-228 carries the N6-(pyridoxal phosphate)lysine modification. (6S)-5,6,7,8-tetrahydrofolate is bound at residue 370-372 (SPF).

This sequence belongs to the SHMT family. As to quaternary structure, homodimer. Requires pyridoxal 5'-phosphate as cofactor.

The protein resides in the cytoplasm. The catalysed reaction is (6R)-5,10-methylene-5,6,7,8-tetrahydrofolate + glycine + H2O = (6S)-5,6,7,8-tetrahydrofolate + L-serine. The protein operates within one-carbon metabolism; tetrahydrofolate interconversion. It participates in amino-acid biosynthesis; glycine biosynthesis; glycine from L-serine: step 1/1. Catalyzes the reversible interconversion of serine and glycine with tetrahydrofolate (THF) serving as the one-carbon carrier. This reaction serves as the major source of one-carbon groups required for the biosynthesis of purines, thymidylate, methionine, and other important biomolecules. Also exhibits THF-independent aldolase activity toward beta-hydroxyamino acids, producing glycine and aldehydes, via a retro-aldol mechanism. The protein is Serine hydroxymethyltransferase of Chloroherpeton thalassium (strain ATCC 35110 / GB-78).